We begin with the raw amino-acid sequence, 334 residues long: Nucleoid-associated protein YpsIP31758_2721 (334 aa).

Belongs to the YejK family.

The protein localises to the cytoplasm. It localises to the nucleoid. In Yersinia pseudotuberculosis serotype O:1b (strain IP 31758), this protein is Nucleoid-associated protein YpsIP31758_2721.